The following is a 370-amino-acid chain: Quinolinate synthase (370 aa).

Histidine 62 and serine 83 together coordinate iminosuccinate. Cysteine 128 contributes to the [4Fe-4S] cluster binding site. Residues tyrosine 154–asparagine 156 and serine 171 each bind iminosuccinate. Cysteine 215 is a binding site for [4Fe-4S] cluster. Iminosuccinate contacts are provided by residues histidine 241–glutamate 243 and threonine 258. Cysteine 312 contacts [4Fe-4S] cluster.

This sequence belongs to the quinolinate synthase family. Type 1 subfamily. Requires [4Fe-4S] cluster as cofactor.

It is found in the cytoplasm. The catalysed reaction is iminosuccinate + dihydroxyacetone phosphate = quinolinate + phosphate + 2 H2O + H(+). The protein operates within cofactor biosynthesis; NAD(+) biosynthesis; quinolinate from iminoaspartate: step 1/1. Its function is as follows. Catalyzes the condensation of iminoaspartate with dihydroxyacetone phosphate to form quinolinate. The chain is Quinolinate synthase from Neisseria meningitidis serogroup C / serotype 2a (strain ATCC 700532 / DSM 15464 / FAM18).